A 1072-amino-acid chain; its full sequence is Carbamoyl phosphate synthase large chain (1072 aa).

The interval 1 to 401 is carboxyphosphate synthetic domain; that stretch reads MPKRLDINTI…SLLKAVRSLE (401 aa). Positions 129, 169, 175, 176, 208, 210, 215, 241, 242, 243, 284, and 298 each coordinate ATP. In terms of domain architecture, ATP-grasp 1 spans 133-327; sequence RTLMQELNEP…IAKLAAKIAV (195 aa). Mg(2+) contacts are provided by Q284, E298, and N300. Residues Q284, E298, and N300 each coordinate Mn(2+). Positions 402 to 546 are oligomerization domain; the sequence is LGIYHLELDH…YSTYADENES (145 aa). Residues 547-929 form a carbamoyl phosphate synthetic domain region; it reads IVTDRKSVVV…ALYKGLVASG (383 aa). The 191-residue stretch at 671–861 folds into the ATP-grasp 2 domain; sequence EAALTKLGIP…MANVATKVIL (191 aa). R707, R746, E752, G777, V778, H779, S780, Q820, and E832 together coordinate ATP. Q820, E832, and N834 together coordinate Mg(2+). The Mn(2+) site is built by Q820, E832, and N834. The 143-residue stretch at 930-1072 folds into the MGS-like domain; the sequence is INIPTHGSVI…QTKRHEVVHA (143 aa). The allosteric domain stretch occupies residues 930–1072; sequence INIPTHGSVI…QTKRHEVVHA (143 aa).

It belongs to the CarB family. As to quaternary structure, composed of two chains; the small (or glutamine) chain promotes the hydrolysis of glutamine to ammonia, which is used by the large (or ammonia) chain to synthesize carbamoyl phosphate. Tetramer of heterodimers (alpha,beta)4. Mg(2+) serves as cofactor. Requires Mn(2+) as cofactor.

The enzyme catalyses hydrogencarbonate + L-glutamine + 2 ATP + H2O = carbamoyl phosphate + L-glutamate + 2 ADP + phosphate + 2 H(+). It catalyses the reaction hydrogencarbonate + NH4(+) + 2 ATP = carbamoyl phosphate + 2 ADP + phosphate + 2 H(+). It participates in amino-acid biosynthesis; L-arginine biosynthesis; carbamoyl phosphate from bicarbonate: step 1/1. Its pathway is pyrimidine metabolism; UMP biosynthesis via de novo pathway; (S)-dihydroorotate from bicarbonate: step 1/3. In terms of biological role, large subunit of the glutamine-dependent carbamoyl phosphate synthetase (CPSase). CPSase catalyzes the formation of carbamoyl phosphate from the ammonia moiety of glutamine, carbonate, and phosphate donated by ATP, constituting the first step of 2 biosynthetic pathways, one leading to arginine and/or urea and the other to pyrimidine nucleotides. The large subunit (synthetase) binds the substrates ammonia (free or transferred from glutamine from the small subunit), hydrogencarbonate and ATP and carries out an ATP-coupled ligase reaction, activating hydrogencarbonate by forming carboxy phosphate which reacts with ammonia to form carbamoyl phosphate. This chain is Carbamoyl phosphate synthase large chain, found in Bacillus thuringiensis subsp. konkukian (strain 97-27).